We begin with the raw amino-acid sequence, 209 residues long: Uracil phosphoribosyltransferase (209 aa).

Residues Arg-79, Arg-104, and 131-139 each bind 5-phospho-alpha-D-ribose 1-diphosphate; that span reads DPMLATGGS. Uracil is bound by residues Ile-194 and 199–201; that span reads GDA. A 5-phospho-alpha-D-ribose 1-diphosphate-binding site is contributed by Asp-200.

Belongs to the UPRTase family. Mg(2+) serves as cofactor.

The enzyme catalyses UMP + diphosphate = 5-phospho-alpha-D-ribose 1-diphosphate + uracil. It participates in pyrimidine metabolism; UMP biosynthesis via salvage pathway; UMP from uracil: step 1/1. Its activity is regulated as follows. Allosterically activated by GTP. Functionally, catalyzes the conversion of uracil and 5-phospho-alpha-D-ribose 1-diphosphate (PRPP) to UMP and diphosphate. The chain is Uracil phosphoribosyltransferase from Latilactobacillus sakei (Lactobacillus sakei).